The primary structure comprises 355 residues: 6-aminohexanoate-oligomer endohydrolase (355 aa).

T267 acts as the Nucleophile in catalysis.

This sequence belongs to the peptidase S58 family. In terms of assembly, heterotetramer composed of 4 alpha/beta heterodimers. Expressed as an inactive precursor that is cleaved autocatalytically at Asn266/Thr267 to generate an active enzyme composed of an alpha subunit and a beta subunit.

It catalyses the reaction [N-(6-aminohexanoyl)]n + H2O = [N-(6-aminohexanoyl)]n-x + [N-(6-aminohexanoyl)]x.. The protein operates within xenobiotic degradation; nylon-6 oligomer degradation. Functionally, involved in the degradation of nylon-6 oligomers. Degrades cyclic and linear oligomers of 6-aminohexanoate (Ahx) with a degree of polymerization greater than three by an endo-type mode. Cannot use Ahx cyclic dimer or the Ahx linear dimer. The chain is 6-aminohexanoate-oligomer endohydrolase from Kocuria sp. (strain KY2).